The following is a 46-amino-acid chain: Large ribosomal subunit protein bL34 (46 aa).

This sequence belongs to the bacterial ribosomal protein bL34 family.

This Trichodesmium erythraeum (strain IMS101) protein is Large ribosomal subunit protein bL34.